The sequence spans 639 residues: MVLTMASQDVQNFFQPLSSWLSRVYEALQQAGDALSASLVLLSKHDSALSDKPEQDLDAAQIQQTYLEDEEQDHDGSPEEASSLFLEEDHFSLSNSDLQDSVQTASPTLGQQAEDSSSVIPPWPSKIPGAPKPQPVLSSIAEEDHHSERQRCGRQHGSGTLEKVNGRKQVNSFGDDEEPSTSSESDEDVTKQFKISVSRSQSFRSGVSEKGKTTELEQKIKCKRLLCTHQEDSAEGSACEDLDRTSQLSYSEILSYEDRPISILPQSPFESRNVRHHGPCRPEMGMVRSLGRPCADGVLETETAFVSRGFEDSYATHSSSLWSPEEQDGTSLQVPHRLLEPISKCGDLDVIFEYRAVTQKLTVTIVRAQGLPDKDRSGVNSWQVHIVLLPSKKQRGKTNIQRGPNPVFKEKVTFTKLEPRDVASCAVRFRLYAARKMTRERMMGEKLFCLSHLHPEGEMKVTLVLEPRSNLSSGESPLSPSVVSHSDSASSTQSLSHGGVPELLVGLSYNATTGRLSVEMIKGSHFRNLAANRAPDTYGKLFLLNCVGQEMSRCKTSIRRGQPNPVYKETFVFQVALFQLSDVTLMISIYSRRTMKRKEMIGWVALGQNSSGEEEQEHWEEMKESKGQQTCRWHTLLES.

Positions 95-119 (NSDLQDSVQTASPTLGQQAEDSSSV) are enriched in polar residues. The disordered stretch occupies residues 95 to 191 (NSDLQDSVQT…SSESDEDVTK (97 aa)). Positions 121 to 134 (PPWPSKIPGAPKPQ) are enriched in pro residues. Over residues 142-151 (EEDHHSERQR) the composition is skewed to basic and acidic residues. Residues 174–187 (GDDEEPSTSSESDE) show a composition bias toward acidic residues. The C2 1 domain occupies 344–463 (KCGDLDVIFE…HPEGEMKVTL (120 aa)). The tract at residues 470–496 (NLSSGESPLSPSVVSHSDSASSTQSLS) is disordered. Low complexity predominate over residues 476–496 (SPLSPSVVSHSDSASSTQSLS). One can recognise a C2 2 domain in the interval 499–634 (GVPELLVGLS…SKGQQTCRWH (136 aa)).

Belongs to the synaptotagmin family. Homodimer. Can also form heterodimers. As to expression, highly expressed in heart and testis. Moderately expressed in kidney.

Its function is as follows. May be involved in the trafficking and exocytosis of secretory vesicles in non-neuronal tissues. Is Ca(2+)-independent. This chain is Synaptotagmin-16 (Syt16), found in Mus musculus (Mouse).